A 332-amino-acid chain; its full sequence is 2,3-diketo-L-gulonate reductase (332 aa).

The active-site Proton donor is histidine 44. NAD(+)-binding positions include 168-174, 224-225, and 304-306; these read ITMVDMS, WK, and GHE.

This sequence belongs to the LDH2/MDH2 oxidoreductase family. DlgD subfamily. As to quaternary structure, homodimer.

Its subcellular location is the cytoplasm. It catalyses the reaction 3-dehydro-L-gulonate + NAD(+) = 2,3-dioxo-L-gulonate + NADH + H(+). The enzyme catalyses 3-dehydro-L-gulonate + NADP(+) = 2,3-dioxo-L-gulonate + NADPH + H(+). In terms of biological role, catalyzes the reduction of 2,3-diketo-L-gulonate in the presence of NADH, to form 3-keto-L-gulonate. The polypeptide is 2,3-diketo-L-gulonate reductase (Salmonella typhi).